We begin with the raw amino-acid sequence, 91 residues long: Small ribosomal subunit protein uS19 (91 aa).

This sequence belongs to the universal ribosomal protein uS19 family.

Functionally, protein S19 forms a complex with S13 that binds strongly to the 16S ribosomal RNA. The polypeptide is Small ribosomal subunit protein uS19 (rpsS) (Mycoplasmopsis pulmonis (strain UAB CTIP) (Mycoplasma pulmonis)).